A 339-amino-acid chain; its full sequence is D-glycero-alpha-D-manno-heptose 7-phosphate kinase (339 aa).

17 to 20 (GGTD) lines the substrate pocket. ATP contacts are provided by residues S57 and 110–116 (GSGLGGS). Residues S116 and E148 each contribute to the Mg(2+) site. D160 acts as the Proton acceptor in catalysis.

It belongs to the GHMP kinase family.

It catalyses the reaction D-glycero-alpha-D-manno-heptose 7-phosphate + ATP = D-glycero-alpha-D-manno-heptose 1,7-bisphosphate + ADP + H(+). The protein operates within nucleotide-sugar biosynthesis; GDP-D-glycero-alpha-D-manno-heptose biosynthesis; GDP-D-glycero-alpha-D-manno-heptose from D-glycero-alpha-D-manno-heptose 7-phosphate: step 1/3. Its pathway is capsule biogenesis; capsule polysaccharide biosynthesis. In terms of biological role, catalyzes the phosphorylation of D-glycero-alpha-D-manno-heptose 7-phosphate at the C-1 position to form D-glycero-alpha-D-manno-heptose 1,7-bisphosphate. In Campylobacter jejuni subsp. jejuni serotype O:2 (strain ATCC 700819 / NCTC 11168), this protein is D-glycero-alpha-D-manno-heptose 7-phosphate kinase.